Consider the following 252-residue polypeptide: Probable transcriptional regulatory protein A1E_02520 (252 aa).

It belongs to the TACO1 family.

The protein localises to the cytoplasm. This is Probable transcriptional regulatory protein A1E_02520 from Rickettsia canadensis (strain McKiel).